A 247-amino-acid chain; its full sequence is UDP-N-acetyl-D-mannosaminuronic acid transferase (247 aa).

It belongs to the glycosyltransferase 26 family.

The catalysed reaction is UDP-N-acetyl-alpha-D-mannosaminouronate + N-acetyl-alpha-D-glucosaminyl-di-trans,octa-cis-undecaprenyl diphosphate = beta-D-ManNAcA-(1-&gt;4)-alpha-D-GlcNAc-di-trans,octa-cis-undecaprenyl diphosphate + UDP + H(+). The protein operates within bacterial outer membrane biogenesis; enterobacterial common antigen biosynthesis. In terms of biological role, catalyzes the synthesis of Und-PP-GlcNAc-ManNAcA (Lipid II), the second lipid-linked intermediate involved in enterobacterial common antigen (ECA) synthesis. This Enterobacter sp. (strain 638) protein is UDP-N-acetyl-D-mannosaminuronic acid transferase.